A 334-amino-acid polypeptide reads, in one-letter code: Cathepsin J (334 aa).

Positions 1 to 17 (MTPTVLLLILCFGVASG) are cleaved as a signal peptide. Residues 18-113 (AQAHDPKLDA…PHAQNHVSIG (96 aa)) constitute a propeptide, activation peptide. A glycan (N-linked (GlcNAc...) asparagine) is linked at Asn-72. Intrachain disulfides connect Cys-135/Cys-178 and Cys-169/Cys-211. The active site involves Cys-138. N-linked (GlcNAc...) asparagine glycosylation is found at Asn-217, Asn-221, and Asn-268. An intrachain disulfide couples Cys-269 to Cys-322. Residues His-276 and Asn-300 contribute to the active site.

It belongs to the peptidase C1 family. In terms of tissue distribution, expressed specifically in placenta.

It is found in the lysosome. This chain is Cathepsin J (Ctsj), found in Mus musculus (Mouse).